We begin with the raw amino-acid sequence, 87 residues long: uncharacterized protein (87 aa).

2 helical membrane passes run 8–28 (IVVLIGTQLAASAVILFIFDL) and 47–67 (LAGSFAFYLFSAGLFFLLIGL).

Its subcellular location is the cell membrane. This is an uncharacterized protein from Bacillus subtilis (strain 168).